The following is a 145-amino-acid chain: Meiotically up-regulated gene 124 protein (145 aa).

A run of 2 helical transmembrane segments spans residues 18-38 (IILTIINSLVYLVNFISCPSI) and 95-115 (FAWSCALPCFVDSFFPSNFFL).

Its subcellular location is the membrane. In terms of biological role, has a role in meiosis. The chain is Meiotically up-regulated gene 124 protein (mug124) from Schizosaccharomyces pombe (strain 972 / ATCC 24843) (Fission yeast).